Consider the following 256-residue polypeptide: Hypodermin-B (256 aa).

An N-terminal signal peptide occupies residues 1-22 (MLKFVILVCSVACVFGAVVPGG). A propeptide spans 23-30 (MLPQLDGR) (activation peptide). In terms of domain architecture, Peptidase S1 spans 31–254 (IVGGFEADIE…VRSWITENAK (224 aa)). A disulfide bridge links Cys56 with Cys72. Catalysis depends on charge relay system residues His71 and Asp116. Disulfide bonds link Cys180/Cys197 and Cys206/Cys230. The active-site Charge relay system is Ser210.

This sequence belongs to the peptidase S1 family.

The protein localises to the secreted. Its function is as follows. Protease that shows preferential cleavage after Arg and Lys residues. The sequence is that of Hypodermin-B from Hypoderma lineatum (Early cattle grub).